A 438-amino-acid chain; its full sequence is uncharacterized protein (438 aa).

Residue His59 coordinates Zn(2+). The Proton acceptor role is filled by Glu62. The Zn(2+) site is built by His63 and Glu139.

The protein belongs to the peptidase M16 family. The cofactor is Zn(2+).

This is an uncharacterized protein from Mycobacterium tuberculosis (strain CDC 1551 / Oshkosh).